Reading from the N-terminus, the 323-residue chain is Pectate lyase A (323 aa).

A signal peptide spans 1-31; it reads MTNFKWIVAAAGLLFGQVLAAPTATSTHAKR. N-linked (GlcNAc...) asparagine glycosylation occurs at N95. Ca(2+) contacts are provided by D136, D165, and D169. R222 is an active-site residue.

The protein belongs to the polysaccharide lyase 1 family. The cofactor is Ca(2+).

It localises to the secreted. The enzyme catalyses Eliminative cleavage of (1-&gt;4)-alpha-D-galacturonan to give oligosaccharides with 4-deoxy-alpha-D-galact-4-enuronosyl groups at their non-reducing ends.. In terms of biological role, pectinolytic enzyme consist of four classes of enzymes: pectin lyase, polygalacturonase, pectin methylesterase and rhamnogalacturonase. Among pectinolytic enzymes, pectin lyase is the most important in depolymerization of pectin, since it cleaves internal glycosidic bonds of highly methylated pectins. Favors pectate, the anion, over pectin, the methyl ester. The sequence is that of Pectate lyase A (plyA) from Aspergillus niger.